We begin with the raw amino-acid sequence, 56 residues long: MADVSERTLQVSVLVAFASGVVLGWQANRLRRRYLDWRKRRLQDKLATTQKKLDLA.

Topologically, residues 2–9 (ADVSERTL) are mitochondrial matrix. A helical transmembrane segment spans residues 10–27 (QVSVLVAFASGVVLGWQA). Over 28–56 (NRLRRRYLDWRKRRLQDKLATTQKKLDLA) the chain is Mitochondrial intermembrane.

It belongs to the mitoregulin family. As to quaternary structure, interacts with mitochondrial trifunctional enzyme, a heterotetrameric complex composed of 2 HADHA subunits and 2 HADHB subunits. Interacts with cytochrome b5 reductase CYB5R3; the interaction is required to maintain cellular lipid composition and leads to stimulation of mitochondrial respiratory complex I activity. Interacts with ATP synthase subunit ATP5F1B/ATP5B. In terms of tissue distribution, enriched in heart and skeletal muscle (at protein level). Also enriched in adipose tissue with lower levels detected in liver, pancreas and brain (at protein level). Higher levels in differentiated myotubes than in satellite cells.

It localises to the mitochondrion inner membrane. Its function is as follows. Positively regulates mitochondrial complex assembly and/or stability. Increases mitochondrial membrane potential while decreasing mitochondrial reactive oxygen species. Increases mitochondrial respiration rate. Increased mitochondrial respiratory activity promotes myogenic differentiation which facilitates muscle growth and regeneration. Increases mitochondrial calcium retention capacity. Plays a role in maintenance of cellular lipid composition through its interaction with cytochrome b5 reductase CYB5R3 which is required for mitochondrial respiratory complex I activity. Interacts with the mitochondrial trifunctional enzyme complex (MTE) and enhances fatty acid beta-oxidation. Not required for MTE formation or stability. Modulates triglyceride clearance in adipocytes through its role in regulating fatty acid beta-oxidation and lipolysis. The polypeptide is Mitoregulin (Mus musculus (Mouse)).